A 203-amino-acid polypeptide reads, in one-letter code: tRNA (pseudouridine(54)-N(1))-methyltransferase (203 aa).

S-adenosyl-L-methionine contacts are provided by leucine 125, glycine 146, and cysteine 179.

It belongs to the methyltransferase superfamily. TrmY family. In terms of assembly, homodimer.

It localises to the cytoplasm. The catalysed reaction is pseudouridine(54) in tRNA + S-adenosyl-L-methionine = N(1)-methylpseudouridine(54) in tRNA + S-adenosyl-L-homocysteine + H(+). Its function is as follows. Specifically catalyzes the N1-methylation of pseudouridine at position 54 (Psi54) in tRNAs. The sequence is that of tRNA (pseudouridine(54)-N(1))-methyltransferase from Methanopyrus kandleri (strain AV19 / DSM 6324 / JCM 9639 / NBRC 100938).